Consider the following 485-residue polypeptide: Aspartyl/glutamyl-tRNA(Asn/Gln) amidotransferase subunit B (485 aa).

This sequence belongs to the GatB/GatE family. GatB subfamily. Heterotrimer of A, B and C subunits.

It catalyses the reaction L-glutamyl-tRNA(Gln) + L-glutamine + ATP + H2O = L-glutaminyl-tRNA(Gln) + L-glutamate + ADP + phosphate + H(+). The enzyme catalyses L-aspartyl-tRNA(Asn) + L-glutamine + ATP + H2O = L-asparaginyl-tRNA(Asn) + L-glutamate + ADP + phosphate + 2 H(+). Its function is as follows. Allows the formation of correctly charged Asn-tRNA(Asn) or Gln-tRNA(Gln) through the transamidation of misacylated Asp-tRNA(Asn) or Glu-tRNA(Gln) in organisms which lack either or both of asparaginyl-tRNA or glutaminyl-tRNA synthetases. The reaction takes place in the presence of glutamine and ATP through an activated phospho-Asp-tRNA(Asn) or phospho-Glu-tRNA(Gln). The sequence is that of Aspartyl/glutamyl-tRNA(Asn/Gln) amidotransferase subunit B from Borrelia garinii subsp. bavariensis (strain ATCC BAA-2496 / DSM 23469 / PBi) (Borreliella bavariensis).